The sequence spans 264 residues: Thymidylate synthase (264 aa).

Position 21 (Arg-21) interacts with dUMP. (6R)-5,10-methylene-5,6,7,8-tetrahydrofolate is bound at residue His-51. 126–127 (RR) is a binding site for dUMP. The active-site Nucleophile is Cys-146. Residues 166–169 (RSCD), Asn-177, and 207–209 (HLY) contribute to the dUMP site. (6R)-5,10-methylene-5,6,7,8-tetrahydrofolate is bound at residue Asp-169. Ser-263 is a binding site for (6R)-5,10-methylene-5,6,7,8-tetrahydrofolate.

It belongs to the thymidylate synthase family. Bacterial-type ThyA subfamily. Homodimer.

It is found in the cytoplasm. It catalyses the reaction dUMP + (6R)-5,10-methylene-5,6,7,8-tetrahydrofolate = 7,8-dihydrofolate + dTMP. Its pathway is pyrimidine metabolism; dTTP biosynthesis. Catalyzes the reductive methylation of 2'-deoxyuridine-5'-monophosphate (dUMP) to 2'-deoxythymidine-5'-monophosphate (dTMP) while utilizing 5,10-methylenetetrahydrofolate (mTHF) as the methyl donor and reductant in the reaction, yielding dihydrofolate (DHF) as a by-product. This enzymatic reaction provides an intracellular de novo source of dTMP, an essential precursor for DNA biosynthesis. The sequence is that of Thymidylate synthase from Wigglesworthia glossinidia brevipalpis.